The primary structure comprises 612 residues: MHASSPSVRPIQALSDQLISQIAAGEVVERPSAVVKELLENALDAGATHISVRLEQGGVKRIAITDNGRGIAPEQLPLALARHATSKINSLTELENVATLGFRGEALASIASVSQLTLTSRTADAAHAWEISGVQSIDQKSTVAPSSGTAGTTVDVLDLYFNTPARRKFLKTEQTEFGHCAEVVRRIALSRPDVAFSLTHNGKTIDHWAVNDIARRSAHILGNEFSAARLPLKETAGPLRLHGFIGLPTASKARGDAQYFYVNGRFVRDKLLMHAVRSAYQDVLHGDRYPSYVISLELDPALVDVNVHPSKIEVRFRDSRAVHQFVFHAVTRALAQTSATAFGAAPSPTPAPSSALPWLREQQQSTFAPQFNSPYGVAQSAANYGALFANGPASNDSNSAAPSLHTAGSHGATTLPDDEFPLGFALAQLHGIFILAQNTKGLVLVDMHAAHERILYEQLKHALDDNELQVQPLLIPITFYADGMEVGTTEDNQDILHALGFDIAALSPTTLAVRAVPALLKNADAQTLARDVLRDVREFGGSRVLLERRNELLGTLACHTAVRANRTLTVPEMNALLRQMEATERADQCNHGRPTWVQLGLSDLDKLFERGR.

Belongs to the DNA mismatch repair MutL/HexB family.

Its function is as follows. This protein is involved in the repair of mismatches in DNA. It is required for dam-dependent methyl-directed DNA mismatch repair. May act as a 'molecular matchmaker', a protein that promotes the formation of a stable complex between two or more DNA-binding proteins in an ATP-dependent manner without itself being part of a final effector complex. The polypeptide is DNA mismatch repair protein MutL (Herminiimonas arsenicoxydans).